We begin with the raw amino-acid sequence, 41 residues long: Large ribosomal subunit protein bL36 (41 aa).

This sequence belongs to the bacterial ribosomal protein bL36 family.

The polypeptide is Large ribosomal subunit protein bL36 (Rhodopseudomonas palustris (strain HaA2)).